Consider the following 391-residue polypeptide: PPE family protein PPE18 (391 aa).

The protein belongs to the mycobacterial PPE family. Interacts with human TLR2.

The protein resides in the secreted. It localises to the cell wall. The protein localises to the cell surface. Functionally, could be a crucial virulence factor for intracellular survival of M.tuberculosis. Favors development of Th2-type response, and down-regulates the pro-inflammatory and Th1-type response. Specifically interacts with the human Toll-like receptor 2 (TLR2), leading to an early and sustained activation of p38 MAPK, which induces IL-10 production and activates Th2-type immune response. Also inhibits pro-inflammatory cytokines IL-12p40 and TNF-alpha production. Acts by up-regulating the expression as well as tyrosine phosphorylation of suppressor of cytokine signaling 3 (SOCS-3), leading to the inhibition of phosphorylation of I-kappa-B-alpha, thereby preventing nuclear translocation of the NF-kappa-B/REL subunits and expression of NF-kappa-B regulated genes like IL-12 and TNF-alpha. Induction of SOCS-3 probably depends on the activation of p38 MAPK. This chain is PPE family protein PPE18, found in Mycobacterium tuberculosis (strain ATCC 25618 / H37Rv).